A 201-amino-acid polypeptide reads, in one-letter code: Small ribosomal subunit protein uS4 (201 aa).

Positions 1–42 (MARYTGPVTRKSRRLGTDLVGGDQSFEKRPYPPGQHGRARIK) are disordered. In terms of domain architecture, S4 RNA-binding spans 91–157 (SRLDNVVYRA…VPFQIARETA (67 aa)).

It belongs to the universal ribosomal protein uS4 family. As to quaternary structure, part of the 30S ribosomal subunit. Contacts protein S5. The interaction surface between S4 and S5 is involved in control of translational fidelity.

Its function is as follows. One of the primary rRNA binding proteins, it binds directly to 16S rRNA where it nucleates assembly of the body of the 30S subunit. Functionally, with S5 and S12 plays an important role in translational accuracy. In Mycobacterium marinum (strain ATCC BAA-535 / M), this protein is Small ribosomal subunit protein uS4.